Here is a 229-residue protein sequence, read N- to C-terminus: Clathrin light chain (229 aa).

Disordered stretches follow at residues 1–24 (MSQF…DSKN) and 76–132 (EMQA…KLRE). Residues 107 to 132 (EPVRKWKEDQMKRIQERDESSKKLRE) are compositionally biased toward basic and acidic residues. The residue at position 229 (Ser229) is a Phosphoserine.

It belongs to the clathrin light chain family. Clathrin coats are formed from molecules containing 3 heavy chains and 3 light chains.

It is found in the cytoplasmic vesicle membrane. The protein localises to the membrane. Its subcellular location is the coated pit. Its function is as follows. Clathrin is the major protein of the polyhedral coat of coated pits and vesicles. The polypeptide is Clathrin light chain (clc1) (Schizosaccharomyces pombe (strain 972 / ATCC 24843) (Fission yeast)).